A 122-amino-acid polypeptide reads, in one-letter code: Seminal vesicle secretory protein 5 (122 aa).

The signal sequence occupies residues 1–21 (MSPTSFFLLTLLLVLVTEARG). Positions 23-122 (RERFSQSAED…KTRVKSRILK (100 aa)) are disordered. A compositionally biased stretch (polar residues) spans 27 to 37 (SQSAEDPSSSH).

This sequence belongs to the SVP2/SVP5/SVP6 family. Testis.

Its subcellular location is the secreted. It localises to the extracellular space. This is Seminal vesicle secretory protein 5 (Svs5) from Mus musculus (Mouse).